Reading from the N-terminus, the 371-residue chain is Aminomethyltransferase (371 aa).

Belongs to the GcvT family. The glycine cleavage system is composed of four proteins: P, T, L and H.

The catalysed reaction is N(6)-[(R)-S(8)-aminomethyldihydrolipoyl]-L-lysyl-[protein] + (6S)-5,6,7,8-tetrahydrofolate = N(6)-[(R)-dihydrolipoyl]-L-lysyl-[protein] + (6R)-5,10-methylene-5,6,7,8-tetrahydrofolate + NH4(+). Its function is as follows. The glycine cleavage system catalyzes the degradation of glycine. This is Aminomethyltransferase from Pectobacterium atrosepticum (strain SCRI 1043 / ATCC BAA-672) (Erwinia carotovora subsp. atroseptica).